The chain runs to 213 residues: Riboflavin synthase (213 aa).

Lumazine-binding repeat units follow at residues 1–97 (MFTG…IGGH) and 98–195 (LMSG…VDTV). 2,4-dihydroxypteridine-binding positions include 4 to 6 (GIV), 48 to 50 (CLT), 62 to 67 (DLMKET), 101 to 103 (GHI), Lys137, 146 to 148 (SLT), and 160 to 165 (HLIPET).

Homotrimer. Unlike in B.subtilis, does not interact with 6,7-dimethyl-8-ribityllumazine synthase.

It catalyses the reaction 2 6,7-dimethyl-8-(1-D-ribityl)lumazine + H(+) = 5-amino-6-(D-ribitylamino)uracil + riboflavin. It participates in cofactor biosynthesis; riboflavin biosynthesis; riboflavin from 2-hydroxy-3-oxobutyl phosphate and 5-amino-6-(D-ribitylamino)uracil: step 2/2. Functionally, catalyzes the dismutation of two molecules of 6,7-dimethyl-8-ribityllumazine, resulting in the formation of riboflavin and 5-amino-6-(D-ribitylamino)uracil. This chain is Riboflavin synthase (ribC), found in Escherichia coli (strain K12).